Here is a 72-residue protein sequence, read N- to C-terminus: SRY-related protein MG42 (72 aa).

Positions 1–69 (VKRPMNAFMV…KHMADYPNYK (69 aa)) form a DNA-binding region, HMG box.

The protein resides in the nucleus. This Tarentola mauritanica (Common wall gecko) protein is SRY-related protein MG42.